Here is a 475-residue protein sequence, read N- to C-terminus: Erythroid membrane-associated protein (475 aa).

The first 29 residues, 1 to 29, serve as a signal peptide directing secretion; it reads MEMASSAGSWLSGCLIPLVFLRLSVHVSG. Positions 30 to 140 constitute an Ig-like V-type domain; sequence HAGDAGKFHV…GNLSKEDTVI (111 aa). At 30 to 155 the chain is on the extracellular side; sequence HAGDAGKFHV…PSVGSLSPSA (126 aa). A disulfide bridge connects residues C50 and C126. N132 carries N-linked (GlcNAc...) asparagine glycosylation. A helical membrane pass occupies residues 156–176; it reads VALAVILPVLVLLIMVCLCLI. The Cytoplasmic segment spans residues 177–475; sequence WKQRRAKEKL…ALQELKAPSF (299 aa). Positions 220-418 constitute a B30.2/SPRY domain; sequence KLKRAAANSG…LVICSELHKS (199 aa). S418 carries the post-translational modification Phosphoserine.

Belongs to the immunoglobulin superfamily. BTN/MOG family. Glycosylated. Expressed in erythroid-enriched bone marrow (at protein level). Highly expressed in bone marrow and to a lower extent in leukocytes, thymus, lymph node and spleen.

Its subcellular location is the cell membrane. The protein resides in the cytoplasm. In terms of biological role, possible role as a cell-adhesion or receptor molecule of erythroid cells. The sequence is that of Erythroid membrane-associated protein (ERMAP) from Homo sapiens (Human).